Reading from the N-terminus, the 373-residue chain is Indole glucosinolate O-methyltransferase 4 (373 aa).

Residues G217, D240, D260, M261, and K274 each contribute to the S-adenosyl-L-homocysteine site. Residue H278 is the Proton acceptor of the active site.

This sequence belongs to the class I-like SAM-binding methyltransferase superfamily. Cation-independent O-methyltransferase family. Interacts with B'GAMMA.

It functions in the pathway secondary metabolite biosynthesis. In terms of biological role, involved in indole glucosinolate biosynthesis. Catalyzes methoxylation reactions of the glucosinolate indole ring. Converts the hydroxy intermediates 4-hydroxy-indol-3-yl-methylglucosinolate (4OH-I3M) and 1-hydroxy-indol-3-yl-methylglucosinolate (1OH-I3M) to 4-methoxy-indol-3-yl-methylglucosinolate (4MO-I3M) and 1-methoxy-indol-3-yl-methylglucosinolate(1MO-I3M), respectively. This Arabidopsis thaliana (Mouse-ear cress) protein is Indole glucosinolate O-methyltransferase 4.